The chain runs to 173 residues: Crossover junction endodeoxyribonuclease RuvC (173 aa).

Residues Asp-8, Glu-67, and Asp-139 contribute to the active site. Residues Asp-8, Glu-67, and Asp-139 each contribute to the Mg(2+) site.

This sequence belongs to the RuvC family. Homodimer which binds Holliday junction (HJ) DNA. The HJ becomes 2-fold symmetrical on binding to RuvC with unstacked arms; it has a different conformation from HJ DNA in complex with RuvA. In the full resolvosome a probable DNA-RuvA(4)-RuvB(12)-RuvC(2) complex forms which resolves the HJ. The cofactor is Mg(2+).

The protein resides in the cytoplasm. The enzyme catalyses Endonucleolytic cleavage at a junction such as a reciprocal single-stranded crossover between two homologous DNA duplexes (Holliday junction).. In terms of biological role, the RuvA-RuvB-RuvC complex processes Holliday junction (HJ) DNA during genetic recombination and DNA repair. Endonuclease that resolves HJ intermediates. Cleaves cruciform DNA by making single-stranded nicks across the HJ at symmetrical positions within the homologous arms, yielding a 5'-phosphate and a 3'-hydroxyl group; requires a central core of homology in the junction. The consensus cleavage sequence is 5'-(A/T)TT(C/G)-3'. Cleavage occurs on the 3'-side of the TT dinucleotide at the point of strand exchange. HJ branch migration catalyzed by RuvA-RuvB allows RuvC to scan DNA until it finds its consensus sequence, where it cleaves and resolves the cruciform DNA. In Enterobacter sp. (strain 638), this protein is Crossover junction endodeoxyribonuclease RuvC.